Reading from the N-terminus, the 607-residue chain is MHHSIRNIAIIAHVDHGKTTLLDKLLQQSGTFEEHEEKTERIMDSNDLEKERGITILSKNTSIKWNNYKINIVDTPGHADFGGEVERVMSMVDSVLLVVDALDGPMPQTRFVTKKAFKYGLNPIVVINKIDRIHSRPDWVVDQVFDLFVNLNASDEQLDFPIIYTSAVLGTSGTDYLNMQNNMIPLYESIIKYAPAPNVNSDQKFQMQISQLDYNSYLGVIGVGRVKQGSIKTNDKVTIIDRFGKHRSGKVNKVLNYFGLKRMEINQGYAGDIIAITGLNKLKISDTICHPDNLQPLPALSIDEPTVNMFFSVNTSPFSGKEGKYITSRQILERLKKETMHNVALQIKETKDPNIFSVSGRGELHLSILIENMRREGFELEVSRPKIIFREINGIQKEPFENVTLDIEEKNQGSVMQFIGIRKGELKNMIPDSKGRVRLEYILSSRALIGFRSEFMSITSGTGLCYSSFSHYDNLQNSNIGQRKNGVLISNSTGMAVGFSLFNLQERGKLFIGHGAQVYEGQIIGLHNRSNDLTVNCLTGKKLTNMRASGTDEAIVLTTAIHFTLEEAIGFINDDELVEVTPHSIRIRKFYLKENERKRANRNKKSI.

Residues 3–198 form the tr-type G domain; the sequence is HSIRNIAIIA…SIIKYAPAPN (196 aa). Residues 15 to 20 and 128 to 131 contribute to the GTP site; these read DHGKTT and NKID.

It belongs to the TRAFAC class translation factor GTPase superfamily. Classic translation factor GTPase family. BipA subfamily. As to quaternary structure, monomer.

It localises to the cytoplasm. The enzyme catalyses GTP + H2O = GDP + phosphate + H(+). A 50S ribosomal subunit assembly protein with GTPase activity, required for 50S subunit assembly at low temperatures, may also play a role in translation. Binds GTP and analogs. Binds the 70S ribosome between the 30S and 50S subunits, in a similar position as ribosome-bound EF-G; it contacts a number of ribosomal proteins, both rRNAs and the A-site tRNA. In Buchnera aphidicola subsp. Acyrthosiphon pisum (strain APS) (Acyrthosiphon pisum symbiotic bacterium), this protein is Large ribosomal subunit assembly factor BipA.